Reading from the N-terminus, the 431-residue chain is Serine hydroxymethyltransferase (431 aa).

Residues L126 and 130-132 (GHL) contribute to the (6S)-5,6,7,8-tetrahydrofolate site. An N6-(pyridoxal phosphate)lysine modification is found at K235.

It belongs to the SHMT family. Homodimer. It depends on pyridoxal 5'-phosphate as a cofactor.

It is found in the cytoplasm. The catalysed reaction is (6R)-5,10-methylene-5,6,7,8-tetrahydrofolate + glycine + H2O = (6S)-5,6,7,8-tetrahydrofolate + L-serine. It functions in the pathway one-carbon metabolism; tetrahydrofolate interconversion. The protein operates within amino-acid biosynthesis; glycine biosynthesis; glycine from L-serine: step 1/1. In terms of biological role, catalyzes the reversible interconversion of serine and glycine with tetrahydrofolate (THF) serving as the one-carbon carrier. This reaction serves as the major source of one-carbon groups required for the biosynthesis of purines, thymidylate, methionine, and other important biomolecules. Also exhibits THF-independent aldolase activity toward beta-hydroxyamino acids, producing glycine and aldehydes, via a retro-aldol mechanism. In Nocardia farcinica (strain IFM 10152), this protein is Serine hydroxymethyltransferase.